A 150-amino-acid polypeptide reads, in one-letter code: 3-dehydroquinate dehydratase (150 aa).

Tyr-26 serves as the catalytic Proton acceptor. Positions 77, 83, and 90 each coordinate substrate. His-103 serves as the catalytic Proton donor. Residues 104 to 105 (LS) and Arg-114 contribute to the substrate site.

Belongs to the type-II 3-dehydroquinase family. In terms of assembly, homododecamer.

The enzyme catalyses 3-dehydroquinate = 3-dehydroshikimate + H2O. Its pathway is metabolic intermediate biosynthesis; chorismate biosynthesis; chorismate from D-erythrose 4-phosphate and phosphoenolpyruvate: step 3/7. Its function is as follows. Catalyzes a trans-dehydration via an enolate intermediate. This Pseudoalteromonas translucida (strain TAC 125) protein is 3-dehydroquinate dehydratase.